A 161-amino-acid polypeptide reads, in one-letter code: Ubiquitin-conjugating enzyme E2Q-like protein 1 (161 aa).

In terms of domain architecture, UBC core spans 1-154 (MKELQDIARL…VKTHEKYGWV (154 aa)). Catalysis depends on Cys88, which acts as the Glycyl thioester intermediate.

Belongs to the ubiquitin-conjugating enzyme family. Interacts with FBXW7.

The protein localises to the nucleus. It carries out the reaction S-ubiquitinyl-[E1 ubiquitin-activating enzyme]-L-cysteine + [E2 ubiquitin-conjugating enzyme]-L-cysteine = [E1 ubiquitin-activating enzyme]-L-cysteine + S-ubiquitinyl-[E2 ubiquitin-conjugating enzyme]-L-cysteine.. It participates in protein modification; protein ubiquitination. Its function is as follows. Probable E2 ubiquitin-protein ligase that catalyzes the covalent attachment of ubiquitin to target proteins. May facilitate the monoubiquitination and degradation of MTOR and CCNE1 through interaction with FBXW7. In Homo sapiens (Human), this protein is Ubiquitin-conjugating enzyme E2Q-like protein 1 (UBE2QL1).